A 186-amino-acid chain; its full sequence is Cytochrome c oxidase subunit 4, mitochondrial (186 aa).

The N-terminal 31 residues, Met-1–Cys-31, are a transit peptide targeting the mitochondrion. Zn(2+)-binding residues include Cys-118, His-126, Cys-142, and Cys-145.

This sequence belongs to the cytochrome c oxidase subunit 5B family. As to quaternary structure, component of the cytochrome c oxidase (complex IV, CIV), a multisubunit enzyme composed of 11 subunits. The complex is composed of a catalytic core of 3 subunits Cox1, Cox2 and Cox3, encoded in the mitochondrial DNA, and 8 supernumerary subunits Cox4, Cox5a/Cox5, Cox6, Cox7, Cox8, Cox7a/Cox9, Cox6b/Cox12 and Cox6a/Cox13, which are encoded in the nuclear genome. The complex exists as a monomer or a dimer and forms respiratory supercomplexes (SCs) in the inner mitochondrial membrane with NADH-ubiquinone oxidoreductase (complex I, CI) and ubiquinol-cytochrome c oxidoreductase (cytochrome b-c1 complex, complex III, CIII), resulting in various different assemblies (supercomplexes I(1)IV(1), I(1)III(3)IV(2), III(2)IV(1) and III(2)IV(2) as well as larger supercomplexes of compositions like I(1)III(2)IV(5-6)).

It localises to the mitochondrion inner membrane. Its pathway is energy metabolism; oxidative phosphorylation. In terms of biological role, component of the cytochrome c oxidase, the last enzyme in the mitochondrial electron transport chain which drives oxidative phosphorylation. The respiratory chain contains 3 multisubunit complexes succinate dehydrogenase (complex II, CII), ubiquinol-cytochrome c oxidoreductase (cytochrome b-c1 complex, complex III, CIII) and cytochrome c oxidase (complex IV, CIV), that cooperate to transfer electrons derived from NADH and succinate to molecular oxygen, creating an electrochemical gradient over the inner membrane that drives transmembrane transport and the ATP synthase. Cytochrome c oxidase is the component of the respiratory chain that catalyzes the reduction of oxygen to water. Electrons originating from reduced cytochrome c in the intermembrane space (IMS) are transferred via the dinuclear copper A center (CU(A)) of Cox2 and heme A of Cox1 to the active site in Cox1, a binuclear center (BNC) formed by heme A3 and copper B (CU(B)). The BNC reduces molecular oxygen to 2 water molecules using 4 electrons from cytochrome c in the IMS and 4 protons from the mitochondrial matrix. The sequence is that of Cytochrome c oxidase subunit 4, mitochondrial (cox-4) from Neurospora crassa (strain ATCC 24698 / 74-OR23-1A / CBS 708.71 / DSM 1257 / FGSC 987).